The sequence spans 282 residues: 4-hydroxybenzoate octaprenyltransferase (282 aa).

Transmembrane regions (helical) follow at residues 17–37 (IGIL…NQGF), 40–60 (IDLL…GCVI), 90–110 (AFIL…KLPI), 113–133 (FYFA…KRFL), 135–155 (APQL…FIAS), 163–183 (FVVL…MYAM), 207–227 (LIIA…AINK), 231–251 (WFFY…LKLI), and 262–282 (AFLV…LALI).

Belongs to the UbiA prenyltransferase family. The cofactor is Mg(2+).

It is found in the cell inner membrane. The enzyme catalyses all-trans-octaprenyl diphosphate + 4-hydroxybenzoate = 4-hydroxy-3-(all-trans-octaprenyl)benzoate + diphosphate. The protein operates within cofactor biosynthesis; ubiquinone biosynthesis. Functionally, catalyzes the prenylation of para-hydroxybenzoate (PHB) with an all-trans polyprenyl group. Mediates the second step in the final reaction sequence of ubiquinone-8 (UQ-8) biosynthesis, which is the condensation of the polyisoprenoid side chain with PHB, generating the first membrane-bound Q intermediate 3-octaprenyl-4-hydroxybenzoate. The chain is 4-hydroxybenzoate octaprenyltransferase from Legionella pneumophila (strain Paris).